Consider the following 137-residue polypeptide: Large ribosomal subunit protein uL16 (137 aa).

This sequence belongs to the universal ribosomal protein uL16 family. In terms of assembly, part of the 50S ribosomal subunit.

Binds 23S rRNA and is also seen to make contacts with the A and possibly P site tRNAs. This Hydrogenovibrio crunogenus (strain DSM 25203 / XCL-2) (Thiomicrospira crunogena) protein is Large ribosomal subunit protein uL16.